Here is a 169-residue protein sequence, read N- to C-terminus: Unfolded protein response-inducible protein 1 (169 aa).

Involved in the unfolded protein response (UPR), a transcriptional response which up-regulates genes that enable cells to cope with misfolded, endoplasmic reticulum-retained proteins. UPR is part of the endoplasmic reticulum quality control (ERQC) which prevents the exit of misfolded secretory and membrane proteins from the endoplasmic reticulum. The chain is Unfolded protein response-inducible protein 1 (ULI1) from Saccharomyces cerevisiae (strain ATCC 204508 / S288c) (Baker's yeast).